A 500-amino-acid chain; its full sequence is Putative antiporter subunit mnhD2 (500 aa).

The next 14 membrane-spanning stretches (helical) occupy residues 2 to 22 (MSNL…ILVF), 32 to 52 (ILSI…LIYV), 78 to 98 (LSLL…AYGF), 108 to 128 (FHLP…FLTS), 130 to 150 (LFNL…LVTL), 161 to 181 (IVYV…IGML), 209 to 229 (ISLV…FMWL), 240 to 260 (LAAL…IRFF), 273 to 293 (TLLV…VIAY), 308 to 328 (IGFI…GAIF), 330 to 350 (LAND…LVYM), 368 to 388 (FFGV…PFSG), 403 to 423 (GNYI…YSLF), and 450 to 470 (GLLS…PVVL).

This sequence belongs to the CPA3 antiporters (TC 2.A.63) subunit D family. In terms of assembly, may form a heterooligomeric complex that consists of seven subunits: mnhA2, mnhB2, mnhC2, mnhD2, mnhE2, mnhF2 and mnhG2.

It localises to the cell membrane. The protein is Putative antiporter subunit mnhD2 (mnhD2) of Staphylococcus epidermidis (strain ATCC 12228 / FDA PCI 1200).